The sequence spans 268 residues: Hydroxypyruvate/pyruvate aldolase (268 aa).

His-48 functions as the Proton acceptor in the catalytic mechanism. A divalent metal cation contacts are provided by Glu-152 and Asp-178.

This sequence belongs to the HpcH/HpaI aldolase family. Requires Mn(2+) as cofactor. Mg(2+) serves as cofactor. It depends on Co(2+) as a cofactor.

It carries out the reaction D-glyceraldehyde + 3-hydroxypyruvate = (3R,4S,5R)-3,4,5,6-tetrahydroxy-2-oxohexanoate. The enzyme catalyses D-glyceraldehyde + 3-hydroxypyruvate = 2-dehydro-D-gluconate. It catalyses the reaction D-glyceraldehyde + 3-hydroxypyruvate = 2-dehydro-D-galactonate. The catalysed reaction is D-glyceraldehyde + pyruvate = 2-dehydro-3-deoxy-L-galactonate. It carries out the reaction 2-dehydro-3-deoxy-D-gluconate = D-glyceraldehyde + pyruvate. Its function is as follows. Aldolase which can catalyze in vitro the aldolisation reaction between hydroxypyruvate (HPA) or pyruvate (PA) and D-glyceraldehyde (D-GA). The condensation of hydroxypyruvate and D-glyceraldehyde produces (3R,4S,5R)-3,4,5,6-tetrahydroxy-2-oxohexanoate as the major product, 2-dehydro-D-gluconate and 2-dehydro-D-galactonate. The condensation of pyruvate and D-glyceraldehyde produces 2-dehydro-3-deoxy-L-galactonate as the major product and 2-dehydro-3-deoxy-D-gluconate. Also catalyzes the retro-aldol type decarboxylation of oxaloacetate, a general property of known pyruvate aldolases. This Pseudomonas aeruginosa protein is Hydroxypyruvate/pyruvate aldolase.